The sequence spans 251 residues: MAHRLQMRLLTWDVKDTLIKLRRPVGEEYASKARAHGVVVEDITVEQAFRQAYRAQSHNFPNYGLSRGLTSRQWWKDVVLHTFRLAGVPDAQAMTPVADQLYEDFSSPFTWQVLEGAEMTLKGCRKRGLKLAVVSNFDRRLEDILTGLGLREHFDFVLTSEAVGCPKPDPRIFREALQRACVEPAVAAHVGDSYLCDYQGSQAVGMHSFLVAGSEPLDSAVRDSVPKEHILPSLSHLLPALDLLEASSPMS.

Lys15 is subject to N6-acetyllysine; alternate. Lys15 carries the N6-succinyllysine; alternate modification. An N6-acetyllysine modification is found at Lys130.

It belongs to the HAD-like hydrolase superfamily.

This chain is Haloacid dehalogenase-like hydrolase domain-containing protein 3 (Hdhd3), found in Mus musculus (Mouse).